Consider the following 227-residue polypeptide: DnaJ homolog subfamily B member 8 (227 aa).

The J domain occupies 3 to 69 (NYYEVLGVQS…KKRSVYDRAG (67 aa)).

Interacts with histone deacetylases HDAC4, HDAC6, and SIRT2, HDAC activity is required for antiaggregation.

Functionally, efficient suppressor of aggregation and toxicity of disease-associated polyglutamine proteins. This chain is DnaJ homolog subfamily B member 8 (Dnajb8), found in Mus musculus (Mouse).